We begin with the raw amino-acid sequence, 318 residues long: Malonyl CoA-acyl carrier protein transacylase, mitochondrial (318 aa).

The protein belongs to the FabD family.

It localises to the mitochondrion. It catalyses the reaction holo-[ACP] + malonyl-CoA = malonyl-[ACP] + CoA. It participates in lipid metabolism; fatty acid biosynthesis. Functionally, involved in biosynthesis of fatty acids in mitochondria. The protein is Malonyl CoA-acyl carrier protein transacylase, mitochondrial (mct1) of Schizosaccharomyces pombe (strain 972 / ATCC 24843) (Fission yeast).